Consider the following 309-residue polypeptide: Probable (S)-ureidoglycine aminohydrolase (309 aa).

The signal sequence occupies residues M1–A22. Mn(2+)-binding residues include E245, H247, H251, and Q285. Residue E245 participates in substrate binding. Residues Q285, Y297, and K301 each coordinate substrate.

The protein belongs to the UGHY family. In terms of assembly, homooctamer. Mn(2+) is required as a cofactor.

Its subcellular location is the endoplasmic reticulum. The catalysed reaction is (S)-2-ureidoglycine + H2O = (S)-ureidoglycolate + NH4(+). Functionally, involved in the catabolism of purine nucleotides. The sequential activity of AAH, UGLYAH and UAH allows a complete purine breakdown without the intermediate generation of urea. This Oryza sativa subsp. japonica (Rice) protein is Probable (S)-ureidoglycine aminohydrolase (UGLYAH).